Reading from the N-terminus, the 132-residue chain is MSMSDPLGDMLTRIRNALARKKGKVVTPASKLRARVLDVLQSEGYIRGYNQVDLGDGKSEIEIELKYFEGLAAIREISRVSKPGRRVYVSAKSIPHVANGLGISILSTPKGVMADYEARKQNVGGELLCRVF.

The protein belongs to the universal ribosomal protein uS8 family. Part of the 30S ribosomal subunit. Contacts proteins S5 and S12.

Its function is as follows. One of the primary rRNA binding proteins, it binds directly to 16S rRNA central domain where it helps coordinate assembly of the platform of the 30S subunit. In Bartonella henselae (strain ATCC 49882 / DSM 28221 / CCUG 30454 / Houston 1) (Rochalimaea henselae), this protein is Small ribosomal subunit protein uS8.